The primary structure comprises 78 residues: DNA-directed RNA polymerase subunit Rpo5 (78 aa).

It belongs to the archaeal Rpo5/eukaryotic RPB5 RNA polymerase subunit family. As to quaternary structure, part of the RNA polymerase complex.

The protein resides in the cytoplasm. It catalyses the reaction RNA(n) + a ribonucleoside 5'-triphosphate = RNA(n+1) + diphosphate. Its function is as follows. DNA-dependent RNA polymerase (RNAP) catalyzes the transcription of DNA into RNA using the four ribonucleoside triphosphates as substrates. This is DNA-directed RNA polymerase subunit Rpo5 from Methanothrix thermoacetophila (strain DSM 6194 / JCM 14653 / NBRC 101360 / PT) (Methanosaeta thermophila).